We begin with the raw amino-acid sequence, 289 residues long: 26S proteasome non-ATPase regulatory subunit 8 (289 aa).

Ser-45 bears the Phosphoserine mark. Residues 101–270 (PSFERYMAQL…QQKPEDTTIP (170 aa)) form the PCI domain. Lys-236 is covalently cross-linked (Glycyl lysine isopeptide (Lys-Gly) (interchain with G-Cter in SUMO2)).

The protein belongs to the proteasome subunit S14 family. As to quaternary structure, component of the 19S proteasome regulatory particle complex. The 26S proteasome consists of a 20S core particle (CP) and two 19S regulatory subunits (RP). The regulatory particle is made of a lid composed of 9 subunits including PSMD8, a base containing 6 ATPases and few additional components. Interacts with DDI2. Interacts with TASOR.

Its function is as follows. Component of the 26S proteasome, a multiprotein complex involved in the ATP-dependent degradation of ubiquitinated proteins. This complex plays a key role in the maintenance of protein homeostasis by removing misfolded or damaged proteins, which could impair cellular functions, and by removing proteins whose functions are no longer required. Therefore, the proteasome participates in numerous cellular processes, including cell cycle progression, apoptosis, or DNA damage repair. This Pongo abelii (Sumatran orangutan) protein is 26S proteasome non-ATPase regulatory subunit 8 (PSMD8).